Reading from the N-terminus, the 245-residue chain is Platelet-derived growth factor subunit B (245 aa).

The signal sequence occupies residues 1-20 (MNRCWALFLSLCCYLRLVSA). Positions 21–81 (EGDPIPEELY…ELESLSRGRR (61 aa)) are cleaved as a propeptide — removed in mature form. A glycan (N-linked (GlcNAc...) asparagine) is linked at N63. Intrachain disulfides connect C101-C145, C134-C182, and C138-C184. Positions 195-245 (RSPGSSQEQRARTPQTRVTIRTVRVRRPPKGKHQKFKHTHDKKALKETLGA) are cleaved as a propeptide — removed in mature form. Basic residues predominate over residues 220–235 (RRPPKGKHQKFKHTHD). Residues 220 to 245 (RRPPKGKHQKFKHTHDKKALKETLGA) form a disordered region. Over residues 236–245 (KKALKETLGA) the composition is skewed to basic and acidic residues.

This sequence belongs to the PDGF/VEGF growth factor family. As to quaternary structure, antiparallel homodimer; disulfide-linked. Antiparallel heterodimer with PDGFA; disulfide-linked. The PDGFB homodimer interacts with PDGFRA and PDGFRB homodimers, and with heterodimers formed by PDGFRA and PDGFRB. The heterodimer composed of PDGFA and PDGFB interacts with PDGFRB homodimers, and with heterodimers formed by PDGFRA and PDGFRB. Interacts with XLKD1. Interacts with LRP1. Interacts with SORL1 (via the N-terminal ectodomain). Interacts with CD82; this interaction inhibits PDGFB-mediated signaling pathway.

It localises to the secreted. Functionally, growth factor that plays an essential role in the regulation of embryonic development, cell proliferation, cell migration, survival and chemotaxis. Potent mitogen for cells of mesenchymal origin. Required for normal proliferation and recruitment of pericytes and vascular smooth muscle cells in the central nervous system, skin, lung, heart and placenta. Required for normal blood vessel development, and for normal development of kidney glomeruli. Plays an important role in wound healing. Signaling is modulated by the formation of heterodimers with PDGFA. This chain is Platelet-derived growth factor subunit B (PDGFB), found in Felis catus (Cat).